We begin with the raw amino-acid sequence, 61 residues long: Small ribosomal subunit protein uS14 (61 aa).

Zn(2+) contacts are provided by C24, C27, C40, and C43.

This sequence belongs to the universal ribosomal protein uS14 family. Zinc-binding uS14 subfamily. In terms of assembly, part of the 30S ribosomal subunit. Contacts proteins S3 and S10. Requires Zn(2+) as cofactor.

In terms of biological role, binds 16S rRNA, required for the assembly of 30S particles and may also be responsible for determining the conformation of the 16S rRNA at the A site. The protein is Small ribosomal subunit protein uS14 of Alkaliphilus metalliredigens (strain QYMF).